The primary structure comprises 91 residues: N.vectensis toxin 8 (91 aa).

Positions 1–26 are cleaved as a signal peptide; that stretch reads MNSLLKVAVVCLVMLVACFVPRVILT. 3 cysteine pairs are disulfide-bonded: cysteine 45-cysteine 76, cysteine 47-cysteine 67, and cysteine 60-cysteine 77.

As to expression, expressed in ectodermal gland cells.

In terms of biological role, has toxic effects on zebrafish larvae. It causes contractile paralysis and twitching of the tail within 20 minutes, followed by death within 30 minutes. Does not show any toxicity when injected into arthropods (cherry shrimps or grass shrimps). This chain is N.vectensis toxin 8, found in Nematostella vectensis (Starlet sea anemone).